The sequence spans 243 residues: 23S rRNA (guanosine-2'-O-)-methyltransferase RlmB (243 aa).

S-adenosyl-L-methionine contacts are provided by G196, I216, and L225.

It belongs to the class IV-like SAM-binding methyltransferase superfamily. RNA methyltransferase TrmH family. RlmB subfamily. In terms of assembly, homodimer.

It localises to the cytoplasm. The catalysed reaction is guanosine(2251) in 23S rRNA + S-adenosyl-L-methionine = 2'-O-methylguanosine(2251) in 23S rRNA + S-adenosyl-L-homocysteine + H(+). Specifically methylates the ribose of guanosine 2251 in 23S rRNA. The protein is 23S rRNA (guanosine-2'-O-)-methyltransferase RlmB of Shigella flexneri.